A 114-amino-acid chain; its full sequence is Large ribosomal subunit protein uL18 (114 aa).

Belongs to the universal ribosomal protein uL18 family. Part of the 50S ribosomal subunit; part of the 5S rRNA/L5/L18/L25 subcomplex. Contacts the 23S rRNA. Contacts protein L27 and the 5S rRNA.

Functionally, this is one of the proteins that bind and probably mediate the attachment of the 5S RNA into the large ribosomal subunit, where it forms part of the central protuberance. This chain is Large ribosomal subunit protein uL18 (rplR), found in Deinococcus radiodurans (strain ATCC 13939 / DSM 20539 / JCM 16871 / CCUG 27074 / LMG 4051 / NBRC 15346 / NCIMB 9279 / VKM B-1422 / R1).